Reading from the N-terminus, the 522-residue chain is Protein nucleotidyltransferase YdiU (522 aa).

Gly-109, Gly-111, Arg-112, Lys-132, Asp-144, Gly-145, Arg-195, and Arg-202 together coordinate ATP. Asp-271 (proton acceptor) is an active-site residue. Mg(2+) is bound by residues Asn-272 and Asp-281. Position 281 (Asp-281) interacts with ATP.

It belongs to the SELO family. The cofactor is Mg(2+). Mn(2+) is required as a cofactor.

It carries out the reaction L-seryl-[protein] + ATP = 3-O-(5'-adenylyl)-L-seryl-[protein] + diphosphate. The enzyme catalyses L-threonyl-[protein] + ATP = 3-O-(5'-adenylyl)-L-threonyl-[protein] + diphosphate. It catalyses the reaction L-tyrosyl-[protein] + ATP = O-(5'-adenylyl)-L-tyrosyl-[protein] + diphosphate. The catalysed reaction is L-histidyl-[protein] + UTP = N(tele)-(5'-uridylyl)-L-histidyl-[protein] + diphosphate. It carries out the reaction L-seryl-[protein] + UTP = O-(5'-uridylyl)-L-seryl-[protein] + diphosphate. The enzyme catalyses L-tyrosyl-[protein] + UTP = O-(5'-uridylyl)-L-tyrosyl-[protein] + diphosphate. Functionally, nucleotidyltransferase involved in the post-translational modification of proteins. It can catalyze the addition of adenosine monophosphate (AMP) or uridine monophosphate (UMP) to a protein, resulting in modifications known as AMPylation and UMPylation. This chain is Protein nucleotidyltransferase YdiU, found in Burkholderia multivorans (strain ATCC 17616 / 249).